The primary structure comprises 440 residues: MSSSTHHWIARRGTALQGSLAIPGDKSVSHRAVMFAALADGVSQIDGFLEGEDTRSTAAIFAKLGVRIETPSASQRIVHGVGVDGLQPPTEALDCGNAGTGMRLLAGLLAAQRFDSVLVGDESLSKRPMRRVTGPLAQMGARIETQDDGTPPLHVHGGQALHGIDFVSPVASAQVKSAVLLAGLYAQGETSVTEPHPTRDYTERMLSAFGVEIDFSPGKARLRGGQRLRATDIAVPADFSSAAFFIVAASIVPGSEVVLRAVGLNPRRTGLLAALRLMGAEISEENHAEHGGEPVADLRVRYAPLRGAQIPEALVPDMIDEFPALFVAAAAASGQTVVTGAAELRVKESDRLAAMATGLRTLGVQVDETPDGATIHGGSIGSGVIESHGDHRIAMAFAIAGQLSTGQVQVNDVANVATSFPGFDTLAQGAGFGLETAGRR.

Residues lysine 26, serine 27, and arginine 31 each contribute to the 3-phosphoshikimate site. Lysine 26 serves as a coordination point for phosphoenolpyruvate. The phosphoenolpyruvate site is built by glycine 99 and arginine 127. Positions 172, 174, 320, and 347 each coordinate 3-phosphoshikimate. Residue glutamine 174 participates in phosphoenolpyruvate binding. Residue aspartate 320 is the Proton acceptor of the active site. Arginine 351 and arginine 392 together coordinate phosphoenolpyruvate.

Belongs to the EPSP synthase family. In terms of assembly, monomer.

Its subcellular location is the cytoplasm. The catalysed reaction is 3-phosphoshikimate + phosphoenolpyruvate = 5-O-(1-carboxyvinyl)-3-phosphoshikimate + phosphate. The protein operates within metabolic intermediate biosynthesis; chorismate biosynthesis; chorismate from D-erythrose 4-phosphate and phosphoenolpyruvate: step 6/7. Its function is as follows. Catalyzes the transfer of the enolpyruvyl moiety of phosphoenolpyruvate (PEP) to the 5-hydroxyl of shikimate-3-phosphate (S3P) to produce enolpyruvyl shikimate-3-phosphate and inorganic phosphate. This chain is 3-phosphoshikimate 1-carboxyvinyltransferase, found in Xanthomonas euvesicatoria pv. vesicatoria (strain 85-10) (Xanthomonas campestris pv. vesicatoria).